The primary structure comprises 502 residues: Lipoprotein LipO (502 aa).

Positions M1–G21 are cleaved as a signal peptide. C22 carries the N-palmitoyl cysteine lipid modification. Residue C22 is the site of S-diacylglycerol cysteine attachment.

The protein localises to the cell membrane. In Bacillus subtilis (strain 168), this protein is Lipoprotein LipO (lipO).